We begin with the raw amino-acid sequence, 418 residues long: Serine hydroxymethyltransferase (418 aa).

Residues Leu-121 and 125–127 contribute to the (6S)-5,6,7,8-tetrahydrofolate site; that span reads GHL. The residue at position 230 (Lys-230) is an N6-(pyridoxal phosphate)lysine. (6S)-5,6,7,8-tetrahydrofolate contacts are provided by residues Glu-246 and 355-357; that span reads SPF.

This sequence belongs to the SHMT family. In terms of assembly, homodimer. Pyridoxal 5'-phosphate is required as a cofactor.

The protein resides in the cytoplasm. The enzyme catalyses (6R)-5,10-methylene-5,6,7,8-tetrahydrofolate + glycine + H2O = (6S)-5,6,7,8-tetrahydrofolate + L-serine. It functions in the pathway one-carbon metabolism; tetrahydrofolate interconversion. The protein operates within amino-acid biosynthesis; glycine biosynthesis; glycine from L-serine: step 1/1. In terms of biological role, catalyzes the reversible interconversion of serine and glycine with tetrahydrofolate (THF) serving as the one-carbon carrier. This reaction serves as the major source of one-carbon groups required for the biosynthesis of purines, thymidylate, methionine, and other important biomolecules. Also exhibits THF-independent aldolase activity toward beta-hydroxyamino acids, producing glycine and aldehydes, via a retro-aldol mechanism. This is Serine hydroxymethyltransferase from Streptococcus pneumoniae serotype 19F (strain G54).